The primary structure comprises 178 residues: Endoribonuclease YbeY (178 aa).

3 residues coordinate Zn(2+): histidine 118, histidine 122, and histidine 128.

It belongs to the endoribonuclease YbeY family. Zn(2+) is required as a cofactor.

It is found in the cytoplasm. Single strand-specific metallo-endoribonuclease involved in late-stage 70S ribosome quality control and in maturation of the 3' terminus of the 16S rRNA. This is Endoribonuclease YbeY from Mycolicibacterium gilvum (strain PYR-GCK) (Mycobacterium gilvum (strain PYR-GCK)).